The sequence spans 150 residues: MRCVVYSIAKSSPLELVKIYQKQCRQFDCELELVDLFPKNTANAQKISKEFAQKSYSLAFEPYLNPKAKNIALHPKAQRGDSFAFSKMLENHLNINFFIAGAYGFEENFLKGCQAWSLSEMTFSHEVAKIVLCEQIYRALSIIFKHPYHK.

S-adenosyl-L-methionine is bound by residues Ala-100 and 118 to 123 (LSEMTF).

This sequence belongs to the RNA methyltransferase RlmH family. As to quaternary structure, homodimer.

The protein localises to the cytoplasm. It catalyses the reaction pseudouridine(1915) in 23S rRNA + S-adenosyl-L-methionine = N(3)-methylpseudouridine(1915) in 23S rRNA + S-adenosyl-L-homocysteine + H(+). In terms of biological role, specifically methylates the pseudouridine at position 1915 (m3Psi1915) in 23S rRNA. The chain is Ribosomal RNA large subunit methyltransferase H from Helicobacter pylori (strain HPAG1).